Consider the following 41-residue polypeptide: Large ribosomal subunit protein bL36 (41 aa).

Belongs to the bacterial ribosomal protein bL36 family.

The sequence is that of Large ribosomal subunit protein bL36 from Sinorhizobium medicae (strain WSM419) (Ensifer medicae).